The primary structure comprises 462 residues: L-seryl-tRNA(Sec) selenium transferase (462 aa).

N6-(pyridoxal phosphate)lysine is present on Lys293.

The protein belongs to the SelA family. The cofactor is pyridoxal 5'-phosphate.

It is found in the cytoplasm. It carries out the reaction L-seryl-tRNA(Sec) + selenophosphate + H(+) = L-selenocysteinyl-tRNA(Sec) + phosphate. The protein operates within aminoacyl-tRNA biosynthesis; selenocysteinyl-tRNA(Sec) biosynthesis; selenocysteinyl-tRNA(Sec) from L-seryl-tRNA(Sec) (bacterial route): step 1/1. Its function is as follows. Converts seryl-tRNA(Sec) to selenocysteinyl-tRNA(Sec) required for selenoprotein biosynthesis. The protein is L-seryl-tRNA(Sec) selenium transferase of Clostridium botulinum (strain ATCC 19397 / Type A).